Consider the following 156-residue polypeptide: Low molecular weight protein-tyrosine-phosphatase YfkJ (156 aa).

Catalysis depends on C8, which acts as the Nucleophile. R14 is a catalytic residue. Catalysis depends on D125, which acts as the Proton donor.

Belongs to the low molecular weight phosphotyrosine protein phosphatase family.

The catalysed reaction is O-phospho-L-tyrosyl-[protein] + H2O = L-tyrosyl-[protein] + phosphate. Efficiently inhibited by Cu(2+) ion, Zn(2+) ion and N-ethylmaleimide, while the addition of Mg(2+), Ca(2+) or Fe(3+) ions has minimal effect. Inhibited in a competitive manner by vanadate. Functionally, dephosphorylates the phosphotyrosine-containing proteins. Involved in ethanol stress resistance. This chain is Low molecular weight protein-tyrosine-phosphatase YfkJ (yfkJ), found in Bacillus subtilis (strain 168).